Consider the following 273-residue polypeptide: Large ribosomal subunit protein uL2 (273 aa).

Residues 221-273 (RGTAMNPVDHPHGGGEGRNFGKHPVTPWGVQTKGKKTRHNKRTDKFIVRRRGK) are disordered. The segment covering 253 to 273 (KGKKTRHNKRTDKFIVRRRGK) has biased composition (basic residues).

Belongs to the universal ribosomal protein uL2 family. In terms of assembly, part of the 50S ribosomal subunit. Forms a bridge to the 30S subunit in the 70S ribosome.

Its function is as follows. One of the primary rRNA binding proteins. Required for association of the 30S and 50S subunits to form the 70S ribosome, for tRNA binding and peptide bond formation. It has been suggested to have peptidyltransferase activity; this is somewhat controversial. Makes several contacts with the 16S rRNA in the 70S ribosome. In Glaesserella parasuis serovar 5 (strain SH0165) (Haemophilus parasuis), this protein is Large ribosomal subunit protein uL2.